The primary structure comprises 216 residues: Splicing factor U2AF 23 kDa subunit (216 aa).

Residues 12–40 form a C3H1-type 1 zinc finger; it reads EQDKVNCSFYYKIGACRHGERCSRKHVKP. One can recognise an RRM domain in the interval 44 to 141; it reads QTILCPNMYK…RPVYAELSPV (98 aa). Residues 143 to 170 form a C3H1-type 2 zinc finger; that stretch reads DFREACCRQHETSECQRGGLCNFMHAKK. Residues 194-216 are disordered; the sequence is EMKKEPNSDSTNRWVSVTAERKN.

In terms of assembly, forms a heterodimer with the U2AF large subunit. Can also form a homodimer. U2AF large subunit (U2AF59), U2AF small subunit (U2AF23) and SF1 (bpb1) interact to form a complex required for complex A formation. Interacts with cwf13.

It localises to the nucleus. Necessary for the splicing of pre-mRNA. The SF1-U2AF59-U2AF23 complex has a role in the recognition of the branch site (5'-UACUAAC-3'), the pyrimidine tract and the 3'-splice site at the 3'-end of introns. The polypeptide is Splicing factor U2AF 23 kDa subunit (Schizosaccharomyces pombe (strain 972 / ATCC 24843) (Fission yeast)).